The sequence spans 417 residues: Mast cell carboxypeptidase A (417 aa).

The signal sequence occupies residues 1–15; it reads MRFFLLMAVIYTTLA. Positions 16-109 are cleaved as a propeptide — activation peptide; the sequence is IAPVHFDREK…IEKQFDVKDE (94 aa). In terms of domain architecture, Peptidase M14 spans 118–412; that stretch reads KYNDWDKIVS…LSVKFIAKYI (295 aa). Intrachain disulfides connect Cys173–Cys186 and Cys245–Cys268. Positions 176 and 179 each coordinate Zn(2+). Residue His304 coordinates Zn(2+). The active-site Proton donor/acceptor is the Glu378.

The protein belongs to the peptidase M14 family. The cofactor is Zn(2+).

The protein localises to the cytoplasmic vesicle. It localises to the secretory vesicle. The enzyme catalyses Release of a C-terminal amino acid, but little or no action with -Asp, -Glu, -Arg, -Lys or -Pro.. In Mus musculus (Mouse), this protein is Mast cell carboxypeptidase A (Cpa3).